Reading from the N-terminus, the 267-residue chain is Methylglyoxal reductase DkgB (267 aa).

The active-site Proton donor is Tyr39. His97 contributes to the substrate binding site. 179-231 provides a ligand contact to NADP(+); sequence MTLAYGKALAEPVIKTIAEQHGATPAQVILSWAMQLGYGVIPSSTKAANLASN.

This sequence belongs to the aldo/keto reductase family. Monomer.

The protein resides in the cytoplasm. It carries out the reaction hydroxyacetone + NADP(+) = methylglyoxal + NADPH + H(+). Functionally, aldo-keto reductase that significantly contributes to cellular methylglyoxal detoxification by catalyzing the NADPH-dependent conversion of methylglyoxal to acetol. The sequence is that of Methylglyoxal reductase DkgB from Yersinia pestis.